The primary structure comprises 72 residues: Translation initiation factor IF-1 (72 aa).

The S1-like domain occupies 1–72 (MAKEDVIEMQ…SKGRIVFRAR (72 aa)).

The protein belongs to the IF-1 family. As to quaternary structure, component of the 30S ribosomal translation pre-initiation complex which assembles on the 30S ribosome in the order IF-2 and IF-3, IF-1 and N-formylmethionyl-tRNA(fMet); mRNA recruitment can occur at any time during PIC assembly.

It localises to the cytoplasm. In terms of biological role, one of the essential components for the initiation of protein synthesis. Stabilizes the binding of IF-2 and IF-3 on the 30S subunit to which N-formylmethionyl-tRNA(fMet) subsequently binds. Helps modulate mRNA selection, yielding the 30S pre-initiation complex (PIC). Upon addition of the 50S ribosomal subunit IF-1, IF-2 and IF-3 are released leaving the mature 70S translation initiation complex. The protein is Translation initiation factor IF-1 of Photobacterium profundum (strain SS9).